The sequence spans 263 residues: Adaptin ear-binding coat-associated protein 2 (263 aa).

Disordered regions lie at residues 167–191 (KKEG…LPPP) and 209–263 (GGSL…WVQF). Phosphoserine is present on S181. 2 consecutive short sequence motifs (WXXF motif) follow at residues 218-221 (GSGG) and 238-241 (DIWG). Residues 246 to 263 (STGSPSSQSQPGTGWVQF) show a composition bias toward low complexity.

This sequence belongs to the NECAP family. Interacts with AP1G1 and AP2A1 components of the adapter protein complexes AP-1 and AP-2. Interacts with the GAE domain proteins GGA1, GGA2 and GGA3. In terms of tissue distribution, expressed in brain, heart, kidney, liver and lung (at protein level).

The protein localises to the cytoplasmic vesicle. It is found in the clathrin-coated vesicle membrane. It localises to the cell membrane. Its function is as follows. Involved in endocytosis. The chain is Adaptin ear-binding coat-associated protein 2 (Necap2) from Rattus norvegicus (Rat).